Here is a 590-residue protein sequence, read N- to C-terminus: Aspartate--tRNA(Asp/Asn) ligase (590 aa).

An L-aspartate-binding site is contributed by glutamate 169. Positions glutamine 193–lysine 196 are aspartate. Arginine 215 is an L-aspartate binding site. ATP is bound by residues arginine 215–glutamate 217 and glutamine 224. Histidine 447 serves as a coordination point for L-aspartate. Glutamate 479 provides a ligand contact to ATP. Arginine 486 provides a ligand contact to L-aspartate. Glycine 531–arginine 534 contributes to the ATP binding site. The tract at residues glycine 556 to serine 590 is disordered.

The protein belongs to the class-II aminoacyl-tRNA synthetase family. Type 1 subfamily. As to quaternary structure, homodimer.

The protein localises to the cytoplasm. It catalyses the reaction tRNA(Asx) + L-aspartate + ATP = L-aspartyl-tRNA(Asx) + AMP + diphosphate. Aspartyl-tRNA synthetase with relaxed tRNA specificity since it is able to aspartylate not only its cognate tRNA(Asp) but also tRNA(Asn). Reaction proceeds in two steps: L-aspartate is first activated by ATP to form Asp-AMP and then transferred to the acceptor end of tRNA(Asp/Asn). This chain is Aspartate--tRNA(Asp/Asn) ligase, found in Nocardioides sp. (strain ATCC BAA-499 / JS614).